The sequence spans 341 residues: Anthranilate phosphoribosyltransferase (341 aa).

5-phospho-alpha-D-ribose 1-diphosphate-binding positions include Gly-80, 83–84 (GD), Thr-88, 90–93 (NIST), 108–116 (KHGNRAVSS), and Ser-120. Gly-80 provides a ligand contact to anthranilate. Ser-92 is a binding site for Mg(2+). Asn-111 is an anthranilate binding site. An anthranilate-binding site is contributed by Arg-166. Asp-225 and Glu-226 together coordinate Mg(2+).

It belongs to the anthranilate phosphoribosyltransferase family. As to quaternary structure, homodimer. Requires Mg(2+) as cofactor.

The enzyme catalyses N-(5-phospho-beta-D-ribosyl)anthranilate + diphosphate = 5-phospho-alpha-D-ribose 1-diphosphate + anthranilate. It functions in the pathway amino-acid biosynthesis; L-tryptophan biosynthesis; L-tryptophan from chorismate: step 2/5. In terms of biological role, catalyzes the transfer of the phosphoribosyl group of 5-phosphorylribose-1-pyrophosphate (PRPP) to anthranilate to yield N-(5'-phosphoribosyl)-anthranilate (PRA). This Priestia megaterium (strain ATCC 12872 / QMB1551) (Bacillus megaterium) protein is Anthranilate phosphoribosyltransferase.